Reading from the N-terminus, the 473-residue chain is Laccase-3 (473 aa).

The first 21 residues, Met-1–Ala-21, serve as a signal peptide directing secretion. Plastocyanin-like domains lie at Ile-23 to Tyr-148 and Val-160 to Tyr-298. N-linked (GlcNAc...) asparagine glycosylation occurs at Asn-75. The Cu cation site is built by His-85, His-87, His-130, and His-132. 2 disulfide bridges follow: Cys-106–Cys-462 and Cys-138–Cys-221. N-linked (GlcNAc...) asparagine glycosylation is found at Asn-226, Asn-283, Asn-309, Asn-346, Asn-350, and Asn-374. One can recognise a Plastocyanin-like 3 domain in the interval Thr-365–Asp-444. Positions 410, 413, 415, 426, 427, 428, and 432 each coordinate Cu cation. Residue Asn-470 is glycosylated (N-linked (GlcNAc...) asparagine).

Belongs to the multicopper oxidase family. In terms of assembly, homodimer. Cu cation serves as cofactor.

The protein localises to the secreted. The catalysed reaction is 4 hydroquinone + O2 = 4 benzosemiquinone + 2 H2O. Functionally, lignin degradation and detoxification of lignin-derived products. The polypeptide is Laccase-3 (LCC3) (Trametes villosa (White-rot fungus)).